Consider the following 215-residue polypeptide: Cytochrome b6 (215 aa).

A helical transmembrane segment spans residues 32-52 (IFYCLGGITLTCFLIQFATGF). Cys35 is a heme c binding site. Heme b contacts are provided by His86 and His100. 3 helical membrane passes run 90 to 110 (ASMM…TGGF), 116 to 136 (LTWV…VTGY), and 186 to 206 (LHTF…FLMI). 2 residues coordinate heme b: His187 and His202.

It belongs to the cytochrome b family. PetB subfamily. The 4 large subunits of the cytochrome b6-f complex are cytochrome b6, subunit IV (17 kDa polypeptide, PetD), cytochrome f and the Rieske protein, while the 4 small subunits are PetG, PetL, PetM and PetN. The complex functions as a dimer. The cofactor is heme b. It depends on heme c as a cofactor.

The protein localises to the cellular thylakoid membrane. Component of the cytochrome b6-f complex, which mediates electron transfer between photosystem II (PSII) and photosystem I (PSI), cyclic electron flow around PSI, and state transitions. The chain is Cytochrome b6 from Synechococcus elongatus.